The sequence spans 489 residues: CUGBP Elav-like family member 1-B (489 aa).

RRM domains follow at residues 16–99, 108–188, and 404–482; these read IKMF…PADS, RKLF…FADT, and ANLF…LKRS.

It belongs to the CELF/BRUNOL family. In terms of assembly, oligomer. Oligomerization is required for RNA-binding and EDEN-dependent deadenylation. Phosphorylated during oocyte maturation and dephosphorylated following egg activation. Dephosphorylation is calcium dependent and correlates with the increase in the activity of EDEN-dependent deadenylation.

Its subcellular location is the nucleus. It localises to the cytoplasm. Functionally, RNA-binding protein implicated in the regulation of several post-transcriptional events. May be involved in pre-mRNA alternative splicing, mRNA translation activation and stability. Mediates the rapid and sequence-specific cytoplasmic deadenylation of EDEN-containing maternal mRNAs following fertilization. Binds to AU-rich sequences (AREs) of jun mRNA. Binds to the embryonic deadenylation element (EDEN) motif localized in the 3'-UTR of maternal mRNAs. Binds to RNA containing several repeats of the consensus sequence 5'-UGU-3'. EDEN-dependent deadenylation is enhanced by the presence of an additional cis element composed of three AUU repeats. The sequence is that of CUGBP Elav-like family member 1-B (cugbp1-b) from Xenopus laevis (African clawed frog).